We begin with the raw amino-acid sequence, 264 residues long: S-adenosylmethionine decarboxylase proenzyme (264 aa).

Ser113 serves as the catalytic Schiff-base intermediate with substrate; via pyruvic acid. At Ser113 the chain carries Pyruvic acid (Ser); by autocatalysis. His118 serves as the catalytic Proton acceptor; for processing activity. Residue Cys141 is the Proton donor; for catalytic activity of the active site.

The protein belongs to the prokaryotic AdoMetDC family. Type 2 subfamily. As to quaternary structure, heterooctamer of four alpha and four beta chains arranged as a tetramer of alpha/beta heterodimers. Pyruvate serves as cofactor. Is synthesized initially as an inactive proenzyme. Formation of the active enzyme involves a self-maturation process in which the active site pyruvoyl group is generated from an internal serine residue via an autocatalytic post-translational modification. Two non-identical subunits are generated from the proenzyme in this reaction, and the pyruvate is formed at the N-terminus of the alpha chain, which is derived from the carboxyl end of the proenzyme. The post-translation cleavage follows an unusual pathway, termed non-hydrolytic serinolysis, in which the side chain hydroxyl group of the serine supplies its oxygen atom to form the C-terminus of the beta chain, while the remainder of the serine residue undergoes an oxidative deamination to produce ammonia and the pyruvoyl group blocking the N-terminus of the alpha chain.

It carries out the reaction S-adenosyl-L-methionine + H(+) = S-adenosyl 3-(methylsulfanyl)propylamine + CO2. Its pathway is amine and polyamine biosynthesis; S-adenosylmethioninamine biosynthesis; S-adenosylmethioninamine from S-adenosyl-L-methionine: step 1/1. Catalyzes the decarboxylation of S-adenosylmethionine to S-adenosylmethioninamine (dcAdoMet), the propylamine donor required for the synthesis of the polyamines spermine and spermidine from the diamine putrescine. The protein is S-adenosylmethionine decarboxylase proenzyme of Xylella fastidiosa (strain 9a5c).